The following is a 475-amino-acid chain: Bifunctional protein HldE (475 aa).

Positions 1–318 are ribokinase; sequence MKITLPEFGK…ANALYTEQET (318 aa). 195–198 is a binding site for ATP; sequence NMSE. The active site involves Asp264. Positions 344–475 are cytidylyltransferase; it reads MTNGCFDILH…DIIKTIRERG (132 aa).

It in the N-terminal section; belongs to the carbohydrate kinase PfkB family. In the C-terminal section; belongs to the cytidylyltransferase family. As to quaternary structure, homodimer.

It catalyses the reaction D-glycero-beta-D-manno-heptose 7-phosphate + ATP = D-glycero-beta-D-manno-heptose 1,7-bisphosphate + ADP + H(+). The enzyme catalyses D-glycero-beta-D-manno-heptose 1-phosphate + ATP + H(+) = ADP-D-glycero-beta-D-manno-heptose + diphosphate. Its pathway is nucleotide-sugar biosynthesis; ADP-L-glycero-beta-D-manno-heptose biosynthesis; ADP-L-glycero-beta-D-manno-heptose from D-glycero-beta-D-manno-heptose 7-phosphate: step 1/4. It functions in the pathway nucleotide-sugar biosynthesis; ADP-L-glycero-beta-D-manno-heptose biosynthesis; ADP-L-glycero-beta-D-manno-heptose from D-glycero-beta-D-manno-heptose 7-phosphate: step 3/4. Catalyzes the phosphorylation of D-glycero-D-manno-heptose 7-phosphate at the C-1 position to selectively form D-glycero-beta-D-manno-heptose-1,7-bisphosphate. Its function is as follows. Catalyzes the ADP transfer from ATP to D-glycero-beta-D-manno-heptose 1-phosphate, yielding ADP-D-glycero-beta-D-manno-heptose. This is Bifunctional protein HldE from Aeromonas salmonicida (strain A449).